The sequence spans 1930 residues: Ankyrin repeat domain-containing protein SAT10 (1930 aa).

ANK repeat units lie at residues 840 to 872, 878 to 908, 920 to 949, 959 to 989, 993 to 1023, 1073 to 1102, 1106 to 1135, 1144 to 1174, 1178 to 1205, 1206 to 1235, 1239 to 1268, 1272 to 1301, 1304 to 1333, 1339 to 1368, 1400 to 1429, 1514 to 1543, 1548 to 1577, 1615 to 1644, 1651 to 1680, and 1696 to 1724; these read FRHT…DLEE, GTWN…GVLN, SGNT…MRGY, QRSS…DYSK, NGAS…FSNE, SGLT…DANG, EFEA…TKTE, GRTR…QLSH, NQRT…ETET, GLQE…EINA, YGNT…RLDL, DNVN…DVNA, GGDT…KFIL, RFEN…ERDL, SGWT…GRAA, QNML…SLTP, RHGT…MLAD, MGRN…NEDL, DGWT…KIFD, and KTWT…TTSD.

Its pathway is mycotoxin biosynthesis. In terms of biological role, ankyrin repeat domain-containing protein; part of the satratoxin SC1 cluster involved in the biosynthesis of satratoxins, trichothecene mycotoxins that are associated with human food poisonings. Satratoxins are suggested to be made by products of multiple gene clusters (SC1, SC2 and SC3) that encode 21 proteins in all, including polyketide synthases, acetyltransferases, and other enzymes expected to modify the trichothecene skeleton. SC1 encodes 10 proteins, SAT1 to SAT10. The largest are SAT8, which encodes a putative polyketide synthase (PKS) with a conventional non-reducing architecture, and SAT10, a putative protein containing four ankyrin repeats and thus may be involved in protein scaffolding. The putative short-chain reductase SAT3 may assist the PKS in some capacity. SAT6 contains a secretory lipase domain and acts probably as a trichothecene esterase. SAT5 encodes a putative acetyltransferase, and so, with SAT6, may affect endogenous protection from toxicity. The probable transcription factor SAT9 may regulate the expression of the SC1 cluster. SC2 encodes proteins SAT11 to SAT16, the largest of which encodes the putative reducing PKS SAT13. SAT11 is a cytochrome P450 monooxygenase, while SAT14 and SAT16 are probable acetyltransferases. The SC2 cluster may be regulated by the transcription factor SAT15. SC3 is a small cluster that encodes 5 proteins, SAT17 to SAT21. SAT21 is a putative MFS-type transporter which may have a role in exporting secondary metabolites. The four other proteins putatively encoded in SC3 include the taurine hydroxylase-like protein SAT17, the O-methyltransferase SAT18, the acetyltransferase SAT19, and the Cys6-type zinc finger SAT20, the latter being probably involved in regulation of SC3 expression. The chain is Ankyrin repeat domain-containing protein SAT10 from Stachybotrys chartarum (strain CBS 109288 / IBT 7711) (Toxic black mold).